Reading from the N-terminus, the 180-residue chain is Large ribosomal subunit protein uL6 (180 aa).

The protein belongs to the universal ribosomal protein uL6 family. Part of the 50S ribosomal subunit.

In terms of biological role, this protein binds to the 23S rRNA, and is important in its secondary structure. It is located near the subunit interface in the base of the L7/L12 stalk, and near the tRNA binding site of the peptidyltransferase center. The protein is Large ribosomal subunit protein uL6 of Borrelia turicatae (strain 91E135).